A 273-amino-acid polypeptide reads, in one-letter code: Pre-mRNA-splicing factor CWC23 (273 aa).

One can recognise a J domain in the interval 15–87 (DLYALLEVSI…SLRATYNRWL (73 aa)).

This sequence belongs to the DnaJ family. Associated with the spliceosome.

Its subcellular location is the cytoplasm. It is found in the nucleus. In terms of biological role, involved in pre-mRNA splicing. May be involved in endoplasmic reticulum-associated protein degradation (ERAD) and required for growth at low and high temperatures. This chain is Pre-mRNA-splicing factor CWC23 (CWC23), found in Eremothecium gossypii (strain ATCC 10895 / CBS 109.51 / FGSC 9923 / NRRL Y-1056) (Yeast).